The primary structure comprises 397 residues: Glia-derived nexin (397 aa).

The signal sequence occupies residues 1–19; sequence MNWHFPFFILTTVTLYSVH. N-linked (GlcNAc...) asparagine glycosylation is present at Asn159.

The protein belongs to the serpin family. Most abundant in seminal vesicles.

It is found in the secreted. The protein localises to the extracellular space. In terms of biological role, serine protease inhibitor with activity toward thrombin, trypsin, and urokinase. Promotes neurite extension by inhibiting thrombin. Binds heparin. The sequence is that of Glia-derived nexin (Serpine2) from Mus musculus (Mouse).